A 76-amino-acid polypeptide reads, in one-letter code: Antimicrobial peptide lumbricin-1 (76 aa).

A propeptide spans 1–14 (MSLCISDYLYLTLT) (removed in mature form).

In terms of biological role, displays antimicrobial activity against the Gram-positive bacteria B.subtilis ATCC 62037, S.aureus ATCC 15752 and S.mutans ATCC 25175, the Gram-negative bacteria E.coli ATCC 27325, P.putida ATCC 17426 and Serratia sp. ATCC 21074, and the fungi C.albicans ATCC 10231, C.neoformans ATCC 34881 and S.cerevisiae ATCC 44774. Does not possess hemolytic activity. The protein is Antimicrobial peptide lumbricin-1 of Lumbricus rubellus (Humus earthworm).